The primary structure comprises 330 residues: Phospho-N-acetylmuramoyl-pentapeptide-transferase (330 aa).

Helical transmembrane passes span 13-33 (VFVFILSFAFSLILGPVLIPM), 58-78 (PTMGGMIFLIPVTVLAAFYAG), 83-103 (ILPLIFVTLGFGLIGFIDDFI), 113-133 (LYWNQKMFGLLLVAVTFAVYL), 152-172 (VSLGWLFVPFVVLVLIASTNA), 179-199 (LDGLAAGVTLIVTVFFTIVAM), 209-229 (MFSAMVAGGCLGFLTFNAYPA), 231-250 (IFMGDTGSLALGGAVGAIAI), and 304-324 (VKVVLVFWTITVLLCILGFFA).

This sequence belongs to the glycosyltransferase 4 family. MraY subfamily. The cofactor is Mg(2+).

The protein localises to the cell membrane. It carries out the reaction UDP-N-acetyl-alpha-D-muramoyl-L-alanyl-gamma-D-glutamyl-meso-2,6-diaminopimeloyl-D-alanyl-D-alanine + di-trans,octa-cis-undecaprenyl phosphate = di-trans,octa-cis-undecaprenyl diphospho-N-acetyl-alpha-D-muramoyl-L-alanyl-D-glutamyl-meso-2,6-diaminopimeloyl-D-alanyl-D-alanine + UMP. Its pathway is cell wall biogenesis; peptidoglycan biosynthesis. Functionally, catalyzes the initial step of the lipid cycle reactions in the biosynthesis of the cell wall peptidoglycan: transfers peptidoglycan precursor phospho-MurNAc-pentapeptide from UDP-MurNAc-pentapeptide onto the lipid carrier undecaprenyl phosphate, yielding undecaprenyl-pyrophosphoryl-MurNAc-pentapeptide, known as lipid I. This is Phospho-N-acetylmuramoyl-pentapeptide-transferase from Acetivibrio thermocellus (strain ATCC 27405 / DSM 1237 / JCM 9322 / NBRC 103400 / NCIMB 10682 / NRRL B-4536 / VPI 7372) (Clostridium thermocellum).